A 554-amino-acid polypeptide reads, in one-letter code: Dihydroxy-acid dehydratase (554 aa).

Asp-78 is a Mg(2+) binding site. Cys-119 is a binding site for [2Fe-2S] cluster. The Mg(2+) site is built by Asp-120 and Lys-121. Lys-121 is subject to N6-carboxylysine. Cys-191 is a [2Fe-2S] cluster binding site. Glu-444 serves as a coordination point for Mg(2+). Ser-470 acts as the Proton acceptor in catalysis.

Belongs to the IlvD/Edd family. As to quaternary structure, homodimer. Requires [2Fe-2S] cluster as cofactor. Mg(2+) serves as cofactor.

The catalysed reaction is (2R)-2,3-dihydroxy-3-methylbutanoate = 3-methyl-2-oxobutanoate + H2O. It carries out the reaction (2R,3R)-2,3-dihydroxy-3-methylpentanoate = (S)-3-methyl-2-oxopentanoate + H2O. It functions in the pathway amino-acid biosynthesis; L-isoleucine biosynthesis; L-isoleucine from 2-oxobutanoate: step 3/4. It participates in amino-acid biosynthesis; L-valine biosynthesis; L-valine from pyruvate: step 3/4. Functions in the biosynthesis of branched-chain amino acids. Catalyzes the dehydration of (2R,3R)-2,3-dihydroxy-3-methylpentanoate (2,3-dihydroxy-3-methylvalerate) into 2-oxo-3-methylpentanoate (2-oxo-3-methylvalerate) and of (2R)-2,3-dihydroxy-3-methylbutanoate (2,3-dihydroxyisovalerate) into 2-oxo-3-methylbutanoate (2-oxoisovalerate), the penultimate precursor to L-isoleucine and L-valine, respectively. This Nitratidesulfovibrio vulgaris (strain ATCC 29579 / DSM 644 / CCUG 34227 / NCIMB 8303 / VKM B-1760 / Hildenborough) (Desulfovibrio vulgaris) protein is Dihydroxy-acid dehydratase.